A 248-amino-acid chain; its full sequence is MPKLVLVRHGQSEWNEKNLFTGWVDVRLSETGQKEAKRAGELLKEAGINVDVLHTSKLSRAIQTANIALDAADQLYVPVKRSWRLNERHYGALQGKDKAQTLEAYGQEKFQIWRRSFDVPPPKIDPKDEYSQVGDRRYADVDPAVVPLTESLALVIDRLLPYWQDEIAGDLLAGKVVLIAAHGNSLRALVKHLDNISDEDIAGLNIPTGIPLVYELDENLKPTKPSYYLDPEAAAAGAAAVAAQGQKK.

Substrate-binding positions include 8 to 15 (RHGQSEWN), 21 to 22 (TG), arginine 60, 87 to 90 (ERHY), lysine 98, 114 to 115 (RR), and 183 to 184 (GN). The active-site Tele-phosphohistidine intermediate is histidine 9. Residue glutamate 87 is the Proton donor/acceptor of the active site.

Belongs to the phosphoglycerate mutase family. BPG-dependent PGAM subfamily.

The protein localises to the cytoplasm. The catalysed reaction is (2R)-2-phosphoglycerate = (2R)-3-phosphoglycerate. It functions in the pathway carbohydrate degradation; glycolysis; pyruvate from D-glyceraldehyde 3-phosphate: step 3/5. This chain is Phosphoglycerate mutase (GPM1), found in Candida albicans (strain SC5314 / ATCC MYA-2876) (Yeast).